A 521-amino-acid chain; its full sequence is Replicase polyprotein 1ab (521 aa).

One can recognise an AV-Nsp11N/CoV-Nsp15M domain in the interval 1-58; the sequence is GGGGQSFLAADNAVLVSTQCYKRHSYVEIPSNLLVQNGMSLKDGANLYVYKRVNGAFV. In terms of domain architecture, NendoU spans 75 to 216; it reads EPRSDVERDF…EDGSIKTCYP (142 aa). Residues histidine 104, histidine 119, lysine 159, lysine 263, aspartate 347, lysine 391, and glutamate 424 contribute to the active site. Residues 219–518 enclose the Nidovirus-type SAM-dependent 2'-O-MTase domain; it reads QSAWTCGYNM…NTSFTSDSFV (300 aa).

In terms of biological role, the replicase polyprotein of coronaviruses is a multifunctional protein: it contains the activities necessary for the transcription of negative stranded RNA, leader RNA, subgenomic mRNAs and progeny virion RNA as well as proteinases responsible for the cleavage of the polyprotein into functional products. Functionally, nendoU is a Mn(2+)-dependent, uridylate-specific enzyme, which leaves 2'-3'-cyclic phosphates 5' to the cleaved bond. This is Replicase polyprotein 1ab (rep) from Gallus gallus (Chicken).